The following is a 269-amino-acid chain: Novel plant SNARE 13 (269 aa).

Topologically, residues 1 to 217 (MASNLPMSPQ…IGRQVATDKC (217 aa)) are cytoplasmic. A coiled-coil region spans residues 33–94 (DKIKDSTRQS…KQSMIKELNS (62 aa)). S74 carries the post-translational modification Phosphoserine. A t-SNARE coiled-coil homology domain is found at 146-208 (MKRMDETDQA…KKASQLVKEI (63 aa)). Residues 218–238 (IMGFLFLIVCGVVAIIIVKIV) traverse the membrane as a helical; Anchor for type IV membrane protein segment. The Vesicular portion of the chain corresponds to 239 to 269 (NPNNKDIRDIPGLAPPAQSRKLLYLRNQDYM).

Belongs to the novel plant SNARE family.

Its subcellular location is the membrane. Vesicle trafficking protein that functions in the secretory pathway. The polypeptide is Novel plant SNARE 13 (NPSN13) (Arabidopsis thaliana (Mouse-ear cress)).